Consider the following 372-residue polypeptide: NAD(P)H-quinone oxidoreductase subunit 1, chloroplastic (372 aa).

8 helical membrane-spanning segments follow: residues 28-48 (IWIC…VLVI), 65-85 (PEYA…KLIL), 97-117 (WLFT…YLVV), 128-148 (IGIG…GLLI), 166-186 (AAQA…IILM), 254-274 (FGLF…FVSV), 312-332 (GIIG…LAVL), and 352-372 (FLLP…ITLL).

The protein belongs to the complex I subunit 1 family. As to quaternary structure, NDH is composed of at least 16 different subunits, 5 of which are encoded in the nucleus.

It is found in the plastid. Its subcellular location is the chloroplast thylakoid membrane. The enzyme catalyses a plastoquinone + NADH + (n+1) H(+)(in) = a plastoquinol + NAD(+) + n H(+)(out). The catalysed reaction is a plastoquinone + NADPH + (n+1) H(+)(in) = a plastoquinol + NADP(+) + n H(+)(out). In terms of biological role, NDH shuttles electrons from NAD(P)H:plastoquinone, via FMN and iron-sulfur (Fe-S) centers, to quinones in the photosynthetic chain and possibly in a chloroplast respiratory chain. The immediate electron acceptor for the enzyme in this species is believed to be plastoquinone. Couples the redox reaction to proton translocation, and thus conserves the redox energy in a proton gradient. This Staurastrum punctulatum (Green alga) protein is NAD(P)H-quinone oxidoreductase subunit 1, chloroplastic.